We begin with the raw amino-acid sequence, 398 residues long: Ethanolaminephosphotransferase 1 (398 aa).

The residue at position 2 (Ala-2) is an N-acetylalanine. 10 helical membrane-spanning segments follow: residues 47-69 (WLAP…LLLT), 84-103 (HVPD…AYTL), 123-145 (LFDH…SIFG), 150-172 (GVSV…LSHW), 179-201 (VLFL…IVTA), 221-243 (LFTA…LNFF), 256-278 (VYEA…VWIL), 291-310 (IFYF…LIVC), 319-341 (TLNW…AATS), and 345-367 (SALL…VQVV). Position 388 (Sec-388) is a non-standard amino acid, selenocysteine.

It belongs to the CDP-alcohol phosphatidyltransferase class-I family. It depends on Mg(2+) as a cofactor. The cofactor is Mn(2+).

It localises to the endoplasmic reticulum membrane. It carries out the reaction CDP-ethanolamine + a 1,2-diacyl-sn-glycerol = a 1,2-diacyl-sn-glycero-3-phosphoethanolamine + CMP + H(+). The catalysed reaction is 1-O-alkyl-2-acyl-sn-glycerol + CDP-ethanolamine = a 1-O-alkyl-2-acyl-sn-glycero-3-phosphoethanolamine + CMP + H(+). It participates in phospholipid metabolism; phosphatidylethanolamine biosynthesis; phosphatidylethanolamine from ethanolamine: step 3/3. In terms of biological role, ethanolaminephosphotransferase that catalyzes the transfer of phosphoethanolamine (PE) from CDP-ethanolamine to lipid acceptors, the final step in the synthesis of PE via the 'Kennedy' pathway. PE is the second most abundant phospholipid of membranes in mammals and is involved in various membrane-related cellular processes. The enzyme is critical for the synthesis of several PE species and also catalyzes the synthesis of plasmanyl-PE, a lipid required for proper myelination and neurodevelopment, from 1-alkyl-2-acylglycerol. This Mus musculus (Mouse) protein is Ethanolaminephosphotransferase 1.